Here is a 327-residue protein sequence, read N- to C-terminus: Ribosomal RNA large subunit methyltransferase F (327 aa).

Positions 1 to 24 (MPRKTSSQPRPAEPKAVLHPRNRH) are disordered.

The protein belongs to the methyltransferase superfamily. METTL16/RlmF family.

Its subcellular location is the cytoplasm. The catalysed reaction is adenosine(1618) in 23S rRNA + S-adenosyl-L-methionine = N(6)-methyladenosine(1618) in 23S rRNA + S-adenosyl-L-homocysteine + H(+). Functionally, specifically methylates the adenine in position 1618 of 23S rRNA. The chain is Ribosomal RNA large subunit methyltransferase F from Stutzerimonas stutzeri (strain A1501) (Pseudomonas stutzeri).